A 603-amino-acid chain; its full sequence is uncharacterized protein (603 aa).

The Ubiquitin-like domain maps to 4–79 (YRIRVTTVDQ…VTFHLVIAVF (76 aa)). Disordered regions lie at residues 85 to 121 (TLPS…PEEL), 159 to 178 (SLPT…NSVS), and 206 to 348 (AQES…NQPF). Polar residues-rich tracts occupy residues 94–117 (VPQS…TSLN) and 162–178 (THEQ…NSVS). The span at 219-231 (SSSSAPLASDQSP) shows a compositional bias: low complexity. The span at 246-264 (LGSNSGLNPRSPNSFSSPL) shows a compositional bias: polar residues. Over residues 280–289 (SLSPLSNSSS) the composition is skewed to low complexity. Polar residues predominate over residues 290–314 (INQVHQNETHGSTISVPNPNLSQMG). Over residues 315-329 (PSHSSSVPSNLSPNP) the composition is skewed to low complexity. The segment covering 330 to 348 (AQNENPSTTSIPSINNQPF) has biased composition (polar residues). A helical transmembrane segment spans residues 496–516 (ILLTSIMSVVFLLQTGALAPF). The interval 544-578 (TAQRVVEIPNETQTEDEQDGTNTPDNRADAEEREL) is disordered. The residue at position 566 (Thr-566) is a Phosphothreonine. Over residues 569-578 (NRADAEEREL) the composition is skewed to basic and acidic residues.

The protein resides in the endoplasmic reticulum membrane. This is an uncharacterized protein from Schizosaccharomyces pombe (strain 972 / ATCC 24843) (Fission yeast).